The following is a 333-amino-acid chain: Mitochondrial glycine transporter (333 aa).

The interval 1–25 (MTNAATDKSVASVARDVSTGKPGKS) is disordered. Solcar repeat units follow at residues 26–109 (PDAA…MRAA), 127–220 (LLPM…FKND), and 236–319 (RSSV…LIKS). 6 helical membrane-spanning segments follow: residues 32 to 57 (LLSGGLAGLTSAVTLQPFDLLKTRLQ), 84 to 110 (GAVPSALRTSVGAGLYFTTLSKMRAAV), 133 to 158 (LATGFVARAIVGYITMPITMVKTRFE), 195 to 218 (GSVATLARDCPYAGLYVLFYEGFK), 240 to 266 (INSSSAILAASVSTTITAPFDAIKTRL), and 294 to 312 (GLSLRFGRKALSAGISWCI).

This sequence belongs to the mitochondrial carrier (TC 2.A.29) family. SLC25A38 subfamily.

The protein localises to the mitochondrion inner membrane. The catalysed reaction is glycine(in) = glycine(out). In terms of biological role, mitochondrial glycine transporter that imports glycine into the mitochondrial matrix. Plays an important role in providing glycine for the first enzymatic step in heme biosynthesis, the condensation of glycine with succinyl-CoA to produce 5-aminolevulinate (ALA) in the mitochondrial matrix. In Scheffersomyces stipitis (strain ATCC 58785 / CBS 6054 / NBRC 10063 / NRRL Y-11545) (Yeast), this protein is Mitochondrial glycine transporter.